Consider the following 367-residue polypeptide: Aurora kinase (367 aa).

Residues Thr-30–Arg-49 form a disordered region. The region spanning Phe-109–Ile-360 is the Protein kinase domain. ATP is bound by residues Leu-115–Val-123 and Lys-138. The Proton acceptor role is filled by Asp-232.

The protein belongs to the protein kinase superfamily. Ser/Thr protein kinase family. Aurora subfamily.

Its subcellular location is the nucleus. It is found in the cytoplasm. It localises to the cytoskeleton. The protein resides in the spindle. The protein localises to the chromosome. Its subcellular location is the centromere. It is found in the kinetochore. The catalysed reaction is L-seryl-[protein] + ATP = O-phospho-L-seryl-[protein] + ADP + H(+). It catalyses the reaction L-threonyl-[protein] + ATP = O-phospho-L-threonyl-[protein] + ADP + H(+). Its function is as follows. Component of the chromosomal passenger complex (CPC), a complex that acts as a key regulator of chromosome segregation and cytokinesis. Has a role in error-correction of aberrent kinetochore-microtubule attachments to ensure that sister kinetochores become bioriented and connect to opposite poles by promoting spindle assembly checkpoint signaling. The chain is Aurora kinase (IPL1) from Eremothecium gossypii (strain ATCC 10895 / CBS 109.51 / FGSC 9923 / NRRL Y-1056) (Yeast).